The primary structure comprises 568 residues: Small ribosomal subunit protein bS1 (568 aa).

S1 motif domains are found at residues 27–93 (GYVA…LSRE), 111–177 (GERV…VSRR), 198–266 (GQVV…LGMK), 283–353 (GKKI…LGLK), 370–440 (GTEV…LGIK), and 459–530 (NAVV…LSIK).

It belongs to the bacterial ribosomal protein bS1 family.

Binds mRNA; thus facilitating recognition of the initiation point. It is needed to translate mRNA with a short Shine-Dalgarno (SD) purine-rich sequence. The protein is Small ribosomal subunit protein bS1 (rpsA) of Rhizobium meliloti (strain 1021) (Ensifer meliloti).